The primary structure comprises 311 residues: Methionyl-tRNA formyltransferase (311 aa).

112 to 115 (SLLP) lines the (6S)-5,6,7,8-tetrahydrofolate pocket.

This sequence belongs to the Fmt family.

It carries out the reaction L-methionyl-tRNA(fMet) + (6R)-10-formyltetrahydrofolate = N-formyl-L-methionyl-tRNA(fMet) + (6S)-5,6,7,8-tetrahydrofolate + H(+). Attaches a formyl group to the free amino group of methionyl-tRNA(fMet). The formyl group appears to play a dual role in the initiator identity of N-formylmethionyl-tRNA by promoting its recognition by IF2 and preventing the misappropriation of this tRNA by the elongation apparatus. This Geobacter metallireducens (strain ATCC 53774 / DSM 7210 / GS-15) protein is Methionyl-tRNA formyltransferase.